The chain runs to 630 residues: Mitochondrial Rho GTPase 1 (630 aa).

In terms of domain architecture, Miro 1 spans 1–168; it reads MKEVRVVICG…FYMCRACVIY (168 aa). Topologically, residues 1-598 are cytoplasmic; it reads MKEVRVVICG…EEDSNKTNYQ (598 aa). GTP contacts are provided by residues 10 to 17, 57 to 61, and 113 to 116; these read GDQGVGKS, DTQSD, and NKSE. EF-hand domains are found at residues 184-219 and 304-339; these read ATIH…CFSK and KGYR…TPGL. Residues aspartate 197, asparagine 199, aspartate 201, glutamate 208, aspartate 317, aspartate 319, aspartate 321, and glutamate 328 each contribute to the Ca(2+) site. The region spanning 419-579 is the Miro 2 domain; that stretch reads RNVFLCFVVG…FIQLAESAQY (161 aa). GTP is bound by residues 428–435, 459–463, and 527–530; these read GSKSCGKT, EFQST, and TKAD. A helical; Anchor for type IV membrane protein transmembrane segment spans residues 599 to 619; sequence LVAALTAFGALLLSVGGSLTW. At 620–630 the chain is on the mitochondrial intermembrane side; that stretch reads KIIKHQYYSKK.

This sequence belongs to the mitochondrial Rho GTPase family.

It is found in the mitochondrion outer membrane. Its function is as follows. Mitochondrial GTPase involved in mitochondrial trafficking. Probably involved in control of anterograde transport of mitochondria and their subcellular distribution. The chain is Mitochondrial Rho GTPase 1 (gem1) from Schizosaccharomyces pombe (strain 972 / ATCC 24843) (Fission yeast).